The following is a 281-amino-acid chain: ATP synthase gamma chain (281 aa).

Belongs to the ATPase gamma chain family. In terms of assembly, F-type ATPases have 2 components, CF(1) - the catalytic core - and CF(0) - the membrane proton channel. CF(1) has five subunits: alpha(3), beta(3), gamma(1), delta(1), epsilon(1). CF(0) has three main subunits: a, b and c.

It localises to the cell inner membrane. Functionally, produces ATP from ADP in the presence of a proton gradient across the membrane. The gamma chain is believed to be important in regulating ATPase activity and the flow of protons through the CF(0) complex. The polypeptide is ATP synthase gamma chain (Ehrlichia canis (strain Jake)).